The chain runs to 238 residues: Ribonuclease PH (238 aa).

Residues Arg-86 and 124 to 126 each bind phosphate; that span reads GTR.

This sequence belongs to the RNase PH family. As to quaternary structure, homohexameric ring arranged as a trimer of dimers.

It catalyses the reaction tRNA(n+1) + phosphate = tRNA(n) + a ribonucleoside 5'-diphosphate. Its function is as follows. Phosphorolytic 3'-5' exoribonuclease that plays an important role in tRNA 3'-end maturation. Removes nucleotide residues following the 3'-CCA terminus of tRNAs; can also add nucleotides to the ends of RNA molecules by using nucleoside diphosphates as substrates, but this may not be physiologically important. Probably plays a role in initiation of 16S rRNA degradation (leading to ribosome degradation) during starvation. The polypeptide is Ribonuclease PH (Mesorhizobium japonicum (strain LMG 29417 / CECT 9101 / MAFF 303099) (Mesorhizobium loti (strain MAFF 303099))).